The primary structure comprises 226 residues: ATP synthase subunit a (226 aa).

Helical transmembrane passes span 18–38, 79–99, 105–125, 134–154, 179–199, and 201–221; these read FITG…SLGA, LAGT…IPGF, SWSF…FEGI, FAHF…IEII, LIML…VLFF, and GILQ…GAVL.

The protein belongs to the ATPase A chain family. In terms of assembly, F-type ATPases have 2 components, CF(1) - the catalytic core - and CF(0) - the membrane proton channel. CF(1) has five subunits: alpha(3), beta(3), gamma(1), delta(1), epsilon(1). CF(0) has three main subunits: a(1), b(2) and c(9-12). The alpha and beta chains form an alternating ring which encloses part of the gamma chain. CF(1) is attached to CF(0) by a central stalk formed by the gamma and epsilon chains, while a peripheral stalk is formed by the delta and b chains.

The protein resides in the cell inner membrane. Its function is as follows. Key component of the proton channel; it plays a direct role in the translocation of protons across the membrane. The sequence is that of ATP synthase subunit a from Helicobacter pylori (strain HPAG1).